A 275-amino-acid chain; its full sequence is Putative methylglyoxal reductase DkgA (275 aa).

Tyrosine 51 (proton donor) is an active-site residue. Residue histidine 107 coordinates substrate. 187–241 contacts NADP(+); it reads SPLAQGGEGVFDQKVIRELADKYGKTPAQIVIRWHLDCGLVVIPKSVTPSRIAEN.

Belongs to the aldo/keto reductase family. Monomer.

It is found in the cytoplasm. The catalysed reaction is hydroxyacetone + NADP(+) = methylglyoxal + NADPH + H(+). Aldo-keto reductase that significantly contributes to cellular methylglyoxal detoxification by catalyzing the NADPH-dependent conversion of methylglyoxal to acetol. In Salmonella typhi, this protein is Putative methylglyoxal reductase DkgA.